The sequence spans 671 residues: Probable potassium transport system protein Kup 2 (671 aa).

Helical transmembrane passes span 18–38, 60–80, 103–123, 149–169, 173–193, 218–238, 252–272, 292–312, 343–363, 373–393, 402–422, and 424–444; these read GFLI…LYAM, VSLV…LIAL, WLIV…ALTP, VTTL…ASLV, FGPI…INSF, AGFF…ALYS, WPFV…WLLA, MVIY…QALI, LYIP…VLYF, YSLA…YFLI, IAFI…ASLV, and FING…VMFI.

It belongs to the HAK/KUP transporter (TC 2.A.72) family.

It localises to the cell membrane. It carries out the reaction K(+)(in) + H(+)(in) = K(+)(out) + H(+)(out). In terms of biological role, transport of potassium into the cell. Likely operates as a K(+):H(+) symporter. This chain is Probable potassium transport system protein Kup 2, found in Lactococcus lactis subsp. cremoris (strain SK11).